Consider the following 867-residue polypeptide: Transcription factor E2F8 (867 aa).

The tract at residues 38-58 is disordered; it reads DFGPLTTPTKPKEGSQGEPWT. Ser71 and Ser102 each carry phosphoserine. 2 DNA-binding regions span residues 113–182 and 261–347; these read RKEK…TWHG and RKDK…KWTG. 3 disordered regions span residues 408–432, 532–616, and 771–800; these read RRKI…NSAP, QSVT…SGSK, and APEN…GQSV. Residues Ser413 and Ser417 each carry the phosphoserine modification. 2 stretches are compositionally biased toward polar residues: residues 413–432 and 532–556; these read SAPS…NSAP and QSVT…TGSK. Residues 557-567 show a composition bias toward basic and acidic residues; it reads DSTDATTEKAA. Residues 568–579 show a composition bias toward polar residues; sequence NDTSKASASTRP. Residues 594–604 are compositionally biased toward basic and acidic residues; sequence RTREPAGERGS. Residues 775–800 are compositionally biased toward polar residues; that stretch reads AGTQQGRATNYDSPVPGQSQPNGQSV.

Belongs to the E2F/DP family. Homodimer and heterodimer: mainly forms homodimers and, to a lesser extent, heterodimers with E2F8. Dimerization is important for DNA-binding. Interacts with HIF1A.

It is found in the nucleus. In terms of biological role, atypical E2F transcription factor that participates in various processes such as angiogenesis and polyploidization of specialized cells. Mainly acts as a transcription repressor that binds DNA independently of DP proteins and specifically recognizes the E2 recognition site 5'-TTTC[CG]CGC-3'. Directly represses transcription of classical E2F transcription factors such as E2F1: component of a feedback loop in S phase by repressing the expression of E2F1, thereby preventing p53/TP53-dependent apoptosis. Plays a key role in polyploidization of cells in placenta and liver by regulating the endocycle, probably by repressing genes promoting cytokinesis and antagonizing action of classical E2F proteins (E2F1, E2F2 and/or E2F3). Required for placental development by promoting polyploidization of trophoblast giant cells. Acts as a promoter of sprouting angiogenesis, possibly by acting as a transcription activator: associates with HIF1A, recognizes and binds the VEGFA promoter, which is different from canonical E2 recognition site, and activates expression of the VEGFA gene. This is Transcription factor E2F8 (E2F8) from Homo sapiens (Human).